The chain runs to 357 residues: UDP-arabinopyranose mutase 1 (357 aa).

At valine 2 the chain carries N-acetylvaline. Positions 110–112 (DDD) match the DXD motif motif. Arginine 158 is a glycosylation site (N-linked (Glc...) arginine).

It belongs to the RGP family. In terms of assembly, heteromers with RGP2, RGP3, RGP4 and RGP5. The cofactor is Mn(2+). Requires Mg(2+) as cofactor. Post-translationally, reversibly glycosylated in vitro by UDP-glucose, UDP-xylose and UDP-galactose, but not UDP-mannose. Predominantly expressed in shoot and root apical meristems. Expressed in epidermal cells of leaves, inflorescence stems and seed coat. Expressed in pollen.

It is found in the cytoplasm. The protein resides in the cytosol. It localises to the golgi apparatus. The catalysed reaction is UDP-beta-L-arabinofuranose = UDP-beta-L-arabinopyranose. In terms of biological role, UDP-L-arabinose mutase involved in the biosynthesis of cell wall non-cellulosic polysaccharides. Catalyzes the interconvertion of UDP-L-arabinopyranose (UDP-Arap) and UDP-L-arabinofuranose (UDP-Araf) in vitro. Preferentially catalyzes the formation of UDP-Arap from UDP-Araf. At thermodynamic equilibrium in vitro the ratio of the pyranose form over the furanose form is 95:5. Is not active on other UDP-sugars (UDP-Gal, UDP-Xyl, UDP-Glc, GDP-Man and GDP-Fuc). Functions redundantly with RGP2 and is essential for proper cell walls and pollen development. Probably involved in the formation of the pectocellulosic cell wall layer intine. Is probably active as heteromer in vivo. The chain is UDP-arabinopyranose mutase 1 from Arabidopsis thaliana (Mouse-ear cress).